The following is a 391-amino-acid chain: B2 bradykinin receptor (391 aa).

Residues M1–Q60 lie on the Extracellular side of the membrane. 2 N-linked (GlcNAc...) asparagine glycosylation sites follow: N30 and N39. The helical transmembrane segment at P61 to L84 threads the bilayer. At H85 to E93 the chain is on the cytoplasmic side. A helical transmembrane segment spans residues I94 to S118. The Extracellular portion of the chain corresponds to N119 to R131. C130 and C211 are disulfide-bonded. A helical transmembrane segment spans residues V132–I153. Residues D154–K175 are Cytoplasmic-facing. Y156 carries the phosphotyrosine modification. Residues L176 to M198 traverse the membrane as a helical segment. Residues K199–E221 are Extracellular-facing. N207 carries an N-linked (GlcNAc...) asparagine glycan. A helical membrane pass occupies residues V222–M248. Residues Q249–R267 are Cytoplasmic-facing. The chain crosses the membrane as a helical span at residues A268–L292. The Extracellular portion of the chain corresponds to D293 to D311. Residues V312–V335 traverse the membrane as a helical segment. Over G336 to Q391 the chain is Cytoplasmic. At Y347 the chain carries Phosphotyrosine. C351 carries the S-palmitoyl cysteine lipid modification. S366 carries the post-translational modification Phosphoserine. T369 carries the post-translational modification Phosphothreonine. Phosphoserine; by GRK6 occurs at positions 373 and 375.

The protein belongs to the G-protein coupled receptor 1 family. Bradykinin receptor subfamily. BDKRB2 sub-subfamily. Forms a complex with PECAM1 and GNAQ. Interacts with PECAM1. Ubiquitous. Widespread in normal smooth muscle tissue and neurons.

It localises to the cell membrane. Functionally, receptor for bradykinin. It is associated with G proteins that activate a phosphatidylinositol-calcium second messenger system. The chain is B2 bradykinin receptor (BDKRB2) from Homo sapiens (Human).